Here is an 883-residue protein sequence, read N- to C-terminus: Probable valine--tRNA ligase, cytoplasmic (883 aa).

Basic and acidic residues predominate over residues 1 to 23; that stretch reads MTLKMDRKALKEEKKKQKLEKFL. The segment at 1 to 49 is disordered; the sequence is MTLKMDRKALKEEKKKQKLEKFLNKKTTQSKISKAPKPAKNKSSSGYDP. Positions 30–45 are enriched in low complexity; the sequence is SKISKAPKPAKNKSSS. The short motif at 82–92 is the 'HIGH' region element; the sequence is PNITGSLHIGH. The short motif at 586–590 is the 'KMSKS' region element; it reads KMSKS. Lys-589 lines the ATP pocket.

This sequence belongs to the class-I aminoacyl-tRNA synthetase family.

The protein resides in the cytoplasm. The enzyme catalyses tRNA(Val) + L-valine + ATP = L-valyl-tRNA(Val) + AMP + diphosphate. This Vairimorpha ceranae (strain BRL01) (Microsporidian parasite) protein is Probable valine--tRNA ligase, cytoplasmic.